Consider the following 347-residue polypeptide: Heat-inducible transcription repressor HrcA (347 aa).

This sequence belongs to the HrcA family.

Negative regulator of class I heat shock genes (grpE-dnaK-dnaJ and groELS operons). Prevents heat-shock induction of these operons. The polypeptide is Heat-inducible transcription repressor HrcA (Mycoplasmopsis pulmonis (strain UAB CTIP) (Mycoplasma pulmonis)).